A 299-amino-acid polypeptide reads, in one-letter code: Probable alpha-L-glutamate ligase (299 aa).

Residues 104-287 enclose the ATP-grasp domain; that stretch reads LQLLAREGIE…VSGKIIEFLE (184 aa). ATP-binding positions include K141, 178–179, D187, and 211–213; these read EF and RSN. Mg(2+) is bound by residues D248, E260, and N262. Mn(2+)-binding residues include D248, E260, and N262.

Belongs to the RimK family. The cofactor is Mg(2+). Mn(2+) serves as cofactor.

This is Probable alpha-L-glutamate ligase from Trichodesmium erythraeum (strain IMS101).